Reading from the N-terminus, the 1235-residue chain is Ubiquitin carboxyl-terminal hydrolase 40 (1235 aa).

The 442-residue stretch at 41 to 482 folds into the USP domain; that stretch reads SGIRNQGGTC…SAYMLFYRKS (442 aa). The active-site Nucleophile is C50. H305 (proton acceptor) is an active-site residue. Basic and acidic residues predominate over residues 1180–1190; it reads IRDDTGKEKQK. The disordered stretch occupies residues 1180-1235; the sequence is IRDDTGKEKQKQRALGRRKSQEALHEQSSYILSSAETPARPRAPETSLSIHVGSFR. Over residues 1205-1215 the composition is skewed to polar residues; it reads EQSSYILSSAE.

The protein belongs to the peptidase C19 family. As to expression, broadly expressed.

The enzyme catalyses Thiol-dependent hydrolysis of ester, thioester, amide, peptide and isopeptide bonds formed by the C-terminal Gly of ubiquitin (a 76-residue protein attached to proteins as an intracellular targeting signal).. Functionally, may be catalytically inactive. The chain is Ubiquitin carboxyl-terminal hydrolase 40 (USP40) from Homo sapiens (Human).